The chain runs to 103 residues: Flagellar hook-basal body complex protein FliE (103 aa).

The protein belongs to the FliE family.

Its subcellular location is the bacterial flagellum basal body. The sequence is that of Flagellar hook-basal body complex protein FliE from Erwinia tasmaniensis (strain DSM 17950 / CFBP 7177 / CIP 109463 / NCPPB 4357 / Et1/99).